We begin with the raw amino-acid sequence, 95 residues long: Protein TusB (95 aa).

It belongs to the DsrH/TusB family. In terms of assembly, heterohexamer, formed by a dimer of trimers. The hexameric TusBCD complex contains 2 copies each of TusB, TusC and TusD. The TusBCD complex interacts with TusE.

The protein resides in the cytoplasm. Functionally, part of a sulfur-relay system required for 2-thiolation of 5-methylaminomethyl-2-thiouridine (mnm(5)s(2)U) at tRNA wobble positions. This chain is Protein TusB, found in Pectobacterium parmentieri.